Here is a 213-residue protein sequence, read N- to C-terminus: Heavy metal-binding protein HIP (213 aa).

One can recognise a C1q domain in the interval 80 to 213; the sequence is FKSHHVAFSA…MSTFTGFMLH (134 aa).

In terms of tissue distribution, pallium, gill and liver.

It localises to the secreted. Binds heavy metals. May function as a carrier of divalent cations in plasma. The protein is Heavy metal-binding protein HIP of Mytilus edulis (Blue mussel).